The chain runs to 212 residues: Fibrillarin-like rRNA/tRNA 2'-O-methyltransferase (212 aa).

S-adenosyl-L-methionine-binding positions include Thr73–Thr74, Glu91–Ile92, Asp116–Ala117, and Asp136–Gln139.

The protein belongs to the methyltransferase superfamily. Fibrillarin family. Interacts with nop5. Component of box C/D small ribonucleoprotein (sRNP) particles that contain rpl7ae, FlpA and nop5, plus a guide RNA.

Functionally, involved in pre-rRNA and tRNA processing. Utilizes the methyl donor S-adenosyl-L-methionine to catalyze the site-specific 2'-hydroxyl methylation of ribose moieties in rRNA and tRNA. Site specificity is provided by a guide RNA that base pairs with the substrate. Methylation occurs at a characteristic distance from the sequence involved in base pairing with the guide RNA. This is Fibrillarin-like rRNA/tRNA 2'-O-methyltransferase from Methanothrix thermoacetophila (strain DSM 6194 / JCM 14653 / NBRC 101360 / PT) (Methanosaeta thermophila).